A 428-amino-acid chain; its full sequence is 3-phosphoshikimate 1-carboxyvinyltransferase (428 aa).

Positions 23, 24, and 28 each coordinate 3-phosphoshikimate. Position 23 (K23) interacts with phosphoenolpyruvate. Phosphoenolpyruvate is bound by residues G97 and R125. 3-phosphoshikimate is bound by residues S170, S171, Q172, S198, D314, N337, and K341. Residue Q172 coordinates phosphoenolpyruvate. The active-site Proton acceptor is the D314. 3 residues coordinate phosphoenolpyruvate: R345, R387, and K412.

It belongs to the EPSP synthase family. In terms of assembly, monomer.

It is found in the cytoplasm. It catalyses the reaction 3-phosphoshikimate + phosphoenolpyruvate = 5-O-(1-carboxyvinyl)-3-phosphoshikimate + phosphate. It participates in metabolic intermediate biosynthesis; chorismate biosynthesis; chorismate from D-erythrose 4-phosphate and phosphoenolpyruvate: step 6/7. Functionally, catalyzes the transfer of the enolpyruvyl moiety of phosphoenolpyruvate (PEP) to the 5-hydroxyl of shikimate-3-phosphate (S3P) to produce enolpyruvyl shikimate-3-phosphate and inorganic phosphate. The sequence is that of 3-phosphoshikimate 1-carboxyvinyltransferase from Cronobacter sakazakii (strain ATCC BAA-894) (Enterobacter sakazakii).